We begin with the raw amino-acid sequence, 475 residues long: Glutamate--tRNA ligase (475 aa).

A 'HIGH' region motif is present at residues 11–21; it reads PSPTGFLHIGG. The 'KMSKS' region motif lies at 240 to 244; that stretch reads KLSKR. Position 243 (K243) interacts with ATP.

The protein belongs to the class-I aminoacyl-tRNA synthetase family. Glutamate--tRNA ligase type 1 subfamily. In terms of assembly, monomer.

It localises to the cytoplasm. It catalyses the reaction tRNA(Glu) + L-glutamate + ATP = L-glutamyl-tRNA(Glu) + AMP + diphosphate. Functionally, catalyzes the attachment of glutamate to tRNA(Glu) in a two-step reaction: glutamate is first activated by ATP to form Glu-AMP and then transferred to the acceptor end of tRNA(Glu). This Bradyrhizobium diazoefficiens (strain JCM 10833 / BCRC 13528 / IAM 13628 / NBRC 14792 / USDA 110) protein is Glutamate--tRNA ligase.